The following is a 157-amino-acid chain: Small ribosomal subunit protein uS7 (157 aa).

The protein belongs to the universal ribosomal protein uS7 family. As to quaternary structure, part of the 30S ribosomal subunit. Contacts proteins S9 and S11.

One of the primary rRNA binding proteins, it binds directly to 16S rRNA where it nucleates assembly of the head domain of the 30S subunit. Is located at the subunit interface close to the decoding center, probably blocks exit of the E-site tRNA. This Hydrogenovibrio crunogenus (strain DSM 25203 / XCL-2) (Thiomicrospira crunogena) protein is Small ribosomal subunit protein uS7.